The primary structure comprises 601 residues: RNA-binding protein MEX3B (601 aa).

2 disordered regions span residues 1-39 (MPSSLFADLERNGSGGGGGGGGGGGGGGSGGGETLDDQR) and 90-109 (GRQGGSGRDGDRRGFSISPT). At Ser4 the chain carries Phosphoserine. The span at 13–33 (GSGGGGGGGGGGGGGGSGGGE) shows a compositional bias: gly residues. 2 consecutive KH domains span residues 98–159 (DGDR…RREI) and 192–253 (QTTI…REEI). Disordered regions lie at residues 284-332 (LHHG…TDSY) and 344-448 (TSRL…GGAS). Residue Ser320 is modified to Phosphoserine. 2 stretches are compositionally biased toward low complexity: residues 320–331 (SSSSLGSASTDS) and 362–371 (NGNNNNNGNG). The segment covering 395–404 (DPAPAPPPGT) has biased composition (pro residues). Residues 420 to 442 (AAPVSSSCSSSASSSASSSSVVF) are compositionally biased toward low complexity. A Phosphoserine modification is found at Ser494. Residues 514-546 (LPGLPSSDTSGSSSSSSSSSSSSSSSSGLRRKG) are disordered. Low complexity predominate over residues 519-540 (SSDTSGSSSSSSSSSSSSSSSS). The RING-type zinc-finger motif lies at 550–590 (CSVCFESEVIAALVPCGHNLFCMECANRICEKSEPECPVCH).

Post-translationally, phosphorylation at Ser-494 creates a docking site for 14-3-3, which stabilizes the protein and modulates its ability to bind RNA.

It localises to the cytoplasm. It is found in the nucleus. The protein localises to the P-body. The protein resides in the cytoplasmic granule. In terms of biological role, RNA-binding protein. May be involved in post-transcriptional regulatory mechanisms. This is RNA-binding protein MEX3B (Mex3b) from Mus musculus (Mouse).